The following is a 490-amino-acid chain: GDP-fucose protein O-fucosyltransferase 2 (490 aa).

Residues 1-25 (MRGSWPRLGFPALLLLLHLLTGSDA) form the signal peptide. N-linked (GlcNAc...) asparagine glycosylation is found at asparagine 29 and asparagine 79. 81–85 (SEGFN) provides a ligand contact to GDP-beta-L-fucose. Glutamate 82 acts as the Proton acceptor in catalysis. Cysteine 203 and cysteine 226 are joined by a disulfide. 336-338 (HLR) contacts GDP-beta-L-fucose. N-linked (GlcNAc...) asparagine glycosylation is present at asparagine 368. Residues aspartate 418 and 435–436 (TF) contribute to the GDP-beta-L-fucose site. Cysteine 459 and cysteine 466 are oxidised to a cystine.

The protein belongs to the glycosyltransferase 68 family.

It localises to the endoplasmic reticulum. The protein localises to the golgi apparatus. It catalyses the reaction L-seryl-[protein] + GDP-beta-L-fucose = 3-O-(alpha-L-fucosyl)-L-seryl-[protein] + GDP + H(+). The enzyme catalyses L-threonyl-[protein] + GDP-beta-L-fucose = 3-O-(alpha-L-fucosyl)-L-threonyl-[protein] + GDP + H(+). It functions in the pathway protein modification; protein glycosylation. Its activity is regulated as follows. Does not require divalent metal ions for optimal activity. Catalyzes the reaction that attaches fucose through an O-glycosidic linkage to a conserved serine or threonine residue in the consensus sequence C1-X-X-S/T-C2 of thrombospondin type I repeats (TSRs) where C1 and C2 are the first and second cysteines of the repeat, respectively. O-fucosylates members of several protein families including the ADAMTS, the thrombospondin (TSP) and spondin families. The polypeptide is GDP-fucose protein O-fucosyltransferase 2 (Drosophila melanogaster (Fruit fly)).